A 520-amino-acid chain; its full sequence is Alpha-1B adrenergic receptor (520 aa).

The Extracellular portion of the chain corresponds to 1–45 (MNPDLDTGHNTSAPAHWGELKNANFTGPNQTSSNSTLPQLDITRA). N-linked (GlcNAc...) asparagine glycosylation is found at Asn-10, Asn-24, Asn-29, and Asn-34. A helical transmembrane segment spans residues 46-70 (ISVGLVLGAFILFAIVGNILVILSV). The Cytoplasmic portion of the chain corresponds to 71–83 (ACNRHLRTPTNYF). Residues 84–105 (IVNLAMADLLLSFTVLPFSAAL) traverse the membrane as a helical segment. At 106-115 (EVLGYWVLGR) the chain is on the extracellular side. A helical transmembrane segment spans residues 116 to 141 (IFCDIWAAVDVLCCTASILSLCAISI). The cysteines at positions 118 and 195 are disulfide-linked. The Cytoplasmic segment spans residues 142–161 (DRYIGVRYSLQYPTLVTRRK). The chain crosses the membrane as a helical span at residues 162 to 184 (AILALLSVWVLSTVISIGPLLGW). The Extracellular portion of the chain corresponds to 185-201 (KEPAPNDDKECGVTEEP). Residues 202–224 (FYALFSSLGSFYIPLAVILVMYC) traverse the membrane as a helical segment. Over 225 to 295 (RVYIVAKRTT…FSREKKAAKT (71 aa)) the chain is Cytoplasmic. Thr-264 is subject to Phosphothreonine. The chain crosses the membrane as a helical span at residues 296 to 319 (LGIVVGMFILCWLPFFIALPLGSL). Residues 320–326 (FSTLKPP) are Extracellular-facing. Residues 327 to 351 (DAVFKVVFWLGYFNSCLNPIIYPCS) traverse the membrane as a helical segment. At 352–520 (SKEFKRAFVR…SNMPLAPGQF (169 aa)) the chain is on the cytoplasmic side. Cys-365 carries the S-palmitoyl cysteine lipid modification. Positions 368–380 (RGRGRRRRRRRRR) match the Nuclear localization signal motif. Disordered stretches follow at residues 394-432 (GGSL…GYLG) and 479-520 (LTEP…PGQF).

Belongs to the G-protein coupled receptor 1 family. Adrenergic receptor subfamily. ADRA1B sub-subfamily. Homo- and heterooligomer. Heterooligomerizes with ADRA1B homooligomers in cardiac myocytes. Interacts with CAVIN4.

It localises to the nucleus membrane. Its subcellular location is the cell membrane. It is found in the cytoplasm. The protein localises to the membrane. The protein resides in the caveola. In terms of biological role, this alpha-adrenergic receptor mediates its action by association with G proteins that activate a phosphatidylinositol-calcium second messenger system. Its effect is mediated by G(q) and G(11) proteins. Nuclear ADRA1A-ADRA1B heterooligomers regulate phenylephrine (PE)-stimulated ERK signaling in cardiac myocytes. This is Alpha-1B adrenergic receptor (ADRA1B) from Homo sapiens (Human).